Reading from the N-terminus, the 143-residue chain is Antiholin-like protein LrgA (143 aa).

4 helical membrane passes run 6 to 26 (VYSF…SNII), 30 to 50 (LPIP…LLCL), 61 to 81 (LGTA…ISVI), and 97 to 117 (VIVV…QFIL).

It belongs to the CidA/LrgA family. LrgA subfamily.

It localises to the cell membrane. Functionally, inhibits the expression or activity of extracellular murein hydrolases by interacting, possibly with LrgB, with the holin-like protein CidA. The LrgAB and CidA proteins may affect the proton motive force of the membrane. May be involved in programmed cell death (PCD), possibly triggering PCD in response to antibiotics and environmental stresses. The protein is Antiholin-like protein LrgA of Bacillus cereus (strain AH187).